A 430-amino-acid chain; its full sequence is CC-adding tRNA nucleotidyltransferase (430 aa).

33-36 (GCVR) serves as a coordination point for CTP. Mg(2+)-binding residues include Asp46 and Asp48. CTP is bound by residues 108–109 (RD), Asn113, 150–159 (DPLRIVRAYR), and Arg190.

This sequence belongs to the tRNA nucleotidyltransferase/poly(A) polymerase family. It depends on Mg(2+) as a cofactor.

The catalysed reaction is a tRNA precursor + 2 CTP = a tRNA with a 3' CC end + 2 diphosphate. Its function is as follows. tRNA nucleotidyltransferase involved in the synthesis of the tRNA CCA terminus. Adds the two cytidine residues to tRNA. The sequence is that of CC-adding tRNA nucleotidyltransferase from Geobacter sulfurreducens (strain ATCC 51573 / DSM 12127 / PCA).